A 130-amino-acid chain; its full sequence is Glycine cleavage system H protein (130 aa).

The 82-residue stretch at 22–103 folds into the Lipoyl-binding domain; it reads KAYIGISDCA…PYGSWIAAIE (82 aa). N6-lipoyllysine is present on Lys-63.

The protein belongs to the GcvH family. The glycine cleavage system is composed of four proteins: P, T, L and H. (R)-lipoate serves as cofactor.

In terms of biological role, the glycine cleavage system catalyzes the degradation of glycine. The H protein shuttles the methylamine group of glycine from the P protein to the T protein. This Clostridium botulinum (strain ATCC 19397 / Type A) protein is Glycine cleavage system H protein.